The sequence spans 1132 residues: MEPNDSTSTAVEEPDSLEVLVKTLDSQTRTFIVGAQMNVKEFKEHIAASVSIPSEKQRLIYQGRVLQDDKKLQEYNVGGKVIHLVERAPPQTHLPSGASSGTGSASATHGGGSPPGTRGPGASVHDRNANSYVMVGTFNLPSDGSAVDVHINMEQAPIQSEPRVRLVMAQHMIRDIQTLLSRMETLPYLQCRGGPQPQHSQPPPQPPAVTPEPVALSSQTSEPVESEAPPREPMEAEEVEERAPAQNPELTPGPAPAGPTPAPETNAPNHPSPAEYVEVLQELQRLESRLQPFLQRYYEVLGAAATTDYNNNHEGREEDQRLINLVGESLRLLGNTFVALSDLRCNLACTPPRHLHVVRPMSHYTTPMVLQQAAIPIQINVGTTVTMTGNGTRPPPTPNAEAPPPGPGQASSVAPSSTNVESSAEGAPPPGPAPPPATSHPRVIRISHQSVEPVVMMHMNIQDSGTQPGGVPSAPTGPLGPPGHGQTLGQQVPGFPTAPTRVVIARPTPPQARPSHPGGPPVSGTLQGAGLGTNASLAQMVSGLVGQLLMQPVLVAQGTPGMAPPPAPATASASAGTTNTATTAGPAPGGPAQPPPTPQPSMADLQFSQLLGNLLGPAGPGAGGSGVASPTITVAMPGVPAFLQGMTDFLQATQTAPPPPPPPPPPPPAPEQQTMPPPGSPSGGAGSPGGLGLESLSPEFFTSVVQGVLSSLLGSLGARAGSSESIAAFIQRLSGSSNIFEPGADGALGFFGALLSLLCQNFSMVDVVMLLHGHFQPLQRLQPQLRSFFHQHYLGGQEPTPSNIRMATHTLITGLEEYVRESFSLVQVQPGVDIIRTNLEFLQEQFNSIAAHVLHCTDSGFGARLLELCNQGLFECLALNLHCLGGQQMELAAVINGRIRRMSRGVNPSLVSWLTTMMGLRLQVVLEHMPVGPDAILRYVRRVGDPPQPLPEEPMEVQGAERASPEPQRENASPAPGTTAEEAMSRGPPPAPEGGSRDEQDGASAETEPWAAAVPPEWVPIIQQDIQSQRKVKPQPPLSDAYLSGMPAKRRKTMQGEGPQLLLSEAVSRAAKAAGARPLTSPESLSRDLEAPEVQESYRQQLRSDIQKRLQEDPNYSPQRFPNAQRAFADDP.

At M1 the chain carries N-acetylmethionine. The Ubiquitin-like domain maps to 17–92; sequence LEVLVKTLDS…HLVERAPPQT (76 aa). Disordered regions lie at residues 87-126 and 189-272; these read RAPP…SVHD and LQCR…NHPS. Residues 95–108 are compositionally biased toward low complexity; sequence PSGASSGTGSASAT. Phosphoserine is present on residues S96 and S113. The residue at position 117 (T117) is a Phosphothreonine. Pro residues-rich tracts occupy residues 200–210 and 251–262; these read SQPPPQPPAVT and TPGPAPAGPTPA. Repeat 1 spans residues 242-270; the sequence is RAPAQNPELTPGPAPAGPTPAPETNAPNH. The tract at residues 242 to 636 is 4 X 29 AA approximate repeats; that stretch reads RAPAQNPELT…VASPTITVAM (395 aa). T350 bears the Phosphothreonine mark. Disordered regions lie at residues 385–441, 461–528, and 560–603; these read VTMT…TSHP, IQDS…TLQG, and PGMA…PSMA. Over residues 393 to 407 the composition is skewed to pro residues; the sequence is RPPPTPNAEAPPPGP. The segment covering 408-426 has biased composition (low complexity); the sequence is GQASSVAPSSTNVESSAEG. Copy 2 of the repeat occupies 415–443; that stretch reads PSSTNVESSAEGAPPPGPAPPPATSHPRV. 2 stretches are compositionally biased toward pro residues: residues 427–438 and 507–520; these read APPPGPAPPPAT and PTPP…PGGP. Residues 569-586 are compositionally biased toward low complexity; the sequence is ATASASAGTTNTATTAGP. 2 tandem repeats follow at residues 574–602 and 608–636. Pro residues predominate over residues 588–599; it reads PGGPAQPPPTPQ. The interval 651–692 is disordered; sequence QATQTAPPPPPPPPPPPPAPEQQTMPPPGSPSGGAGSPGGLG. Over residues 656–680 the composition is skewed to pro residues; it reads APPPPPPPPPPPPAPEQQTMPPPGS. The segment covering 681–692 has biased composition (gly residues); the sequence is PSGGAGSPGGLG. Residues V832, S964, and S973 each carry the phosphoserine modification. Positions 947–1132 are disordered; that stretch reads PQPLPEEPME…NAQRAFADDP (186 aa). Residues 1005–1020 are compositionally biased toward low complexity; that stretch reads AETEPWAAAVPPEWVP. Positions 1010–1040 are required for interaction with GET4; it reads WAAAVPPEWVPIIQQDIQSQRKVKPQPPLSD. Residues 1012–1054 carry the Nuclear localization site motif; sequence AAVPPEWVPIIQQDIQSQRKVKPQPPLSDAYLSGMPAKRRKTM. Positions 1022–1132 are sufficient for the delivery of client proteins to the endoplasmic reticulum; that stretch reads IQQDIQSQRK…NAQRAFADDP (111 aa). At T1053 the chain carries Phosphothreonine. The BAG-similar domain, required and sufficient for interaction with UBL4A stretch occupies residues 1058–1115; sequence GPQLLLSEAVSRAAKAAGARPLTSPESLSRDLEAPEVQESYRQQLRSDIQKRLQEDPN. Low complexity predominate over residues 1066 to 1076; the sequence is AVSRAAKAAGA. A phosphoserine mark is found at S1081 and S1117.

As to quaternary structure, component of the BAG6/BAT3 complex, also named BAT3 complex, at least composed of BAG6, UBL4A and GET4/TRC35. Interacts with GET4; the interaction is direct and localizes BAG6 in the cytosol. Interacts with UBL4A; the interaction is direct and required for UBL4A protein stability. Interacts with AIFM1. Interacts with HSPA2. Interacts with CTCFL. Interacts with p300/EP300. Interacts (via ubiquitin-like domain) with RNF126; required for BAG6-dependent ubiquitination of proteins mislocalized to the cytosol. Interacts (via ubiquitin-like domain) with SGTA; SGTA competes with RNF126 by binding the same region of BAG6, thereby promoting deubiquitination of BAG6-target proteins and rescuing them from degradation. Interacts with ricin A chain. Interacts with VCP and AMFR; both form the VCP/p97-AMFR/gp78 complex. Interacts with SYVN1. Interacts with USP13; the interaction is direct and may mediate UBL4A deubiquitination. Interacts with ZFAND2B. Interacts with KPNA2. Interacts with UBQLN4. In terms of assembly, (Microbial infection) Interacts with L.pneumophila Lpg2160 and LegU1 proteins. Post-translationally, ricin can induce a cleavage by the caspase CASP3. The released C-terminal peptide induces apoptosis. (Microbial infection) In case of infection by L.pneumophila, ubiquitinated by the SCF(LegU1) complex. In terms of tissue distribution, expressed by immature dendritic cells (at protein level).

The protein resides in the cytoplasm. It localises to the cytosol. Its subcellular location is the nucleus. The protein localises to the secreted. It is found in the extracellular exosome. In terms of biological role, ATP-independent molecular chaperone preventing the aggregation of misfolded and hydrophobic patches-containing proteins. Functions as part of a cytosolic protein quality control complex, the BAG6/BAT3 complex, which maintains these client proteins in a soluble state and participates in their proper delivery to the endoplasmic reticulum or alternatively can promote their sorting to the proteasome where they undergo degradation. The BAG6/BAT3 complex is involved in the post-translational delivery of tail-anchored/type II transmembrane proteins to the endoplasmic reticulum membrane. Recruited to ribosomes, it interacts with the transmembrane region of newly synthesized tail-anchored proteins and together with SGTA and ASNA1 mediates their delivery to the endoplasmic reticulum. Client proteins that cannot be properly delivered to the endoplasmic reticulum are ubiquitinated by RNF126, an E3 ubiquitin-protein ligase associated with BAG6 and are sorted to the proteasome. SGTA which prevents the recruitment of RNF126 to BAG6 may negatively regulate the ubiquitination and the proteasomal degradation of client proteins. Similarly, the BAG6/BAT3 complex also functions as a sorting platform for proteins of the secretory pathway that are mislocalized to the cytosol either delivering them to the proteasome for degradation or to the endoplasmic reticulum. The BAG6/BAT3 complex also plays a role in the endoplasmic reticulum-associated degradation (ERAD), a quality control mechanism that eliminates unwanted proteins of the endoplasmic reticulum through their retrotranslocation to the cytosol and their targeting to the proteasome. It maintains these retrotranslocated proteins in an unfolded yet soluble state condition in the cytosol to ensure their proper delivery to the proteasome. BAG6 is also required for selective ubiquitin-mediated degradation of defective nascent chain polypeptides by the proteasome. In this context, it may participate in the production of antigenic peptides and play a role in antigen presentation in immune response. BAG6 is also involved in endoplasmic reticulum stress-induced pre-emptive quality control, a mechanism that selectively attenuates the translocation of newly synthesized proteins into the endoplasmic reticulum and reroutes them to the cytosol for proteasomal degradation. BAG6 may ensure the proper degradation of these proteins and thereby protects the endoplasmic reticulum from protein overload upon stress. By inhibiting the polyubiquitination and subsequent proteasomal degradation of HSPA2 it may also play a role in the assembly of the synaptonemal complex during spermatogenesis. Also positively regulates apoptosis by interacting with and stabilizing the proapoptotic factor AIFM1. By controlling the steady-state expression of the IGF1R receptor, indirectly regulates the insulin-like growth factor receptor signaling pathway. Its function is as follows. Involved in DNA damage-induced apoptosis: following DNA damage, accumulates in the nucleus and forms a complex with p300/EP300, enhancing p300/EP300-mediated p53/TP53 acetylation leading to increase p53/TP53 transcriptional activity. When nuclear, may also act as a component of some chromatin regulator complex that regulates histone 3 'Lys-4' dimethylation (H3K4me2). Functionally, released extracellularly via exosomes, it is a ligand of the natural killer/NK cells receptor NCR3 and stimulates NK cells cytotoxicity. It may thereby trigger NK cells cytotoxicity against neighboring tumor cells and immature myeloid dendritic cells (DC). Mediates ricin-induced apoptosis. This Homo sapiens (Human) protein is Large proline-rich protein BAG6.